We begin with the raw amino-acid sequence, 485 residues long: Glutamyl-tRNA(Gln) amidotransferase subunit A (485 aa).

Residues Lys78 and Ser153 each act as charge relay system in the active site. Ser177 acts as the Acyl-ester intermediate in catalysis.

It belongs to the amidase family. GatA subfamily. Heterotrimer of A, B and C subunits.

The enzyme catalyses L-glutamyl-tRNA(Gln) + L-glutamine + ATP + H2O = L-glutaminyl-tRNA(Gln) + L-glutamate + ADP + phosphate + H(+). Its function is as follows. Allows the formation of correctly charged Gln-tRNA(Gln) through the transamidation of misacylated Glu-tRNA(Gln) in organisms which lack glutaminyl-tRNA synthetase. The reaction takes place in the presence of glutamine and ATP through an activated gamma-phospho-Glu-tRNA(Gln). The sequence is that of Glutamyl-tRNA(Gln) amidotransferase subunit A from Pelobacter propionicus (strain DSM 2379 / NBRC 103807 / OttBd1).